Reading from the N-terminus, the 284-residue chain is Phospholipid phosphatase 1 (284 aa).

Over 1 to 6 (MFDKTR) the chain is Cytoplasmic. Positions 5–7 (TRL) match the PDZ-binding; involved in localization to the apical cell membrane motif. Residues 7–27 (LPYVALDVLCVLLAGLPFAIL) form a helical membrane-spanning segment. Topologically, residues 28 to 53 (TSRHTPFQRGVFCNDESIKYPYKEDT) are extracellular. The helical transmembrane segment at 54–74 (IPYALLGGIIIPFSIIVIILG) threads the bilayer. Over 75–94 (ETLSVYCNLLHSNSFIRNNY) the chain is Cytoplasmic. Residues 95–115 (IATIYKAIGTFLFGAAASQSL) traverse the membrane as a helical segment. Topologically, residues 116 to 164 (TDIAKYSIGRLRPHFLDVCDPDWSKINCSDGYIEYYICRGNAERVKEGR) are extracellular. A phosphatase sequence motif I region spans residues 120-128 (KYSIGRLRP). An N-linked (GlcNAc...) asparagine glycan is attached at Asn142. Residues 165–185 (LSFYSGHSSFSMYCMLFVALY) form a helical membrane-spanning segment. Positions 168–171 (YSGH) are phosphatase sequence motif II. Residue His171 is the Proton donors of the active site. Residues 186 to 199 (LQARMKGDWARLLR) are Cytoplasmic-facing. Residues 200–220 (PTLQFGLVAVSIYVGLSRVSD) traverse the membrane as a helical segment. The phosphatase sequence motif III stretch occupies residues 216–227 (SRVSDYKHHWSD). The Extracellular portion of the chain corresponds to 221 to 229 (YKHHWSDVL). The Nucleophile role is filled by His223. Residues 230 to 250 (TGLIQGALVAILVAVYVSDFF) form a helical membrane-spanning segment. Residues 251 to 284 (KERTSFKERKEEDSHTTLHETPTTGNHYPSNHQP) lie on the Cytoplasmic side of the membrane. The tract at residues 260–284 (KEEDSHTTLHETPTTGNHYPSNHQP) is disordered. A compositionally biased stretch (polar residues) spans 269 to 284 (HETPTTGNHYPSNHQP).

Belongs to the PA-phosphatase related phosphoesterase family. Forms functional homodimers and homooligomers that are not required for substrate recognition and catalytic activity. Can also form heterooligomers with PLPP2 and PLPP3. Post-translationally, N-glycosylated. N-linked sugars are of the complex type. N-glycosylation is not required for the phosphatase activity. In terms of tissue distribution, widely expressed with highest expression found in prostate. Found to be down-regulated in colon adenocarcinomas. Predominant in kidney, lung, placenta and liver. As to expression, predominant in heart and pancreas.

Its subcellular location is the cell membrane. It is found in the apical cell membrane. It localises to the membrane raft. The protein localises to the membrane. The protein resides in the caveola. It carries out the reaction a 1,2-diacyl-sn-glycero-3-phosphate + H2O = a 1,2-diacyl-sn-glycerol + phosphate. It catalyses the reaction 1,2-dihexadecanoyl-sn-glycero-3-phosphate + H2O = 1,2-dihexadecanoyl-sn-glycerol + phosphate. The catalysed reaction is 1,2-di-(9Z-octadecenoyl)-sn-glycero-3-phosphate + H2O = 1,2-di-(9Z-octadecenoyl)-sn-glycerol + phosphate. The enzyme catalyses a monoacyl-sn-glycero-3-phosphate + H2O = a monoacylglycerol + phosphate. It carries out the reaction (9Z)-octadecenoyl-sn-glycero-3-phosphate + H2O = (9Z-octadecenoyl)-glycerol + phosphate. It catalyses the reaction a 1-acyl-sn-glycero-3-phosphate + H2O = a 1-acyl-sn-glycerol + phosphate. The catalysed reaction is 1-(9Z-octadecenoyl)-sn-glycero-3-phosphate + H2O = 1-(9Z-octadecenoyl)-sn-glycerol + phosphate. The enzyme catalyses a 1,2-diacyl-sn-glycerol 3-diphosphate + H2O = a 1,2-diacyl-sn-glycero-3-phosphate + phosphate + H(+). It carries out the reaction sphing-4-enine 1-phosphate + H2O = sphing-4-enine + phosphate. It catalyses the reaction an N-acylsphing-4-enine 1-phosphate + H2O = an N-acylsphing-4-enine + phosphate. The catalysed reaction is N-(octanoyl)-sphing-4-enine-1-phosphate + H2O = N-octanoylsphing-4-enine + phosphate. The enzyme catalyses N-(9Z-octadecenoyl)-ethanolamine phosphate + H2O = N-(9Z-octadecenoyl) ethanolamine + phosphate. It carries out the reaction 1-hexadecanoyl-2-(9Z-octadecenoyl)-sn-glycero-3-phosphate + H2O = 1-hexadecanoyl-2-(9Z-octadecenoyl)-sn-glycerol + phosphate. It participates in lipid metabolism; phospholipid metabolism. With respect to regulation, magnesium-independent phospholipid phosphatase. Insensitive to N-ethylmaleimide. Inhibited by sphingosine, zinc ions and modestly by propanolol. Inhibited by vanadate. Its function is as follows. Magnesium-independent phospholipid phosphatase of the plasma membrane that catalyzes the dephosphorylation of a variety of glycerolipid and sphingolipid phosphate esters including phosphatidate/PA, lysophosphatidate/LPA, diacylglycerol pyrophosphate/DGPP, sphingosine 1-phosphate/S1P and ceramide 1-phosphate/C1P. Also acts on N-oleoyl ethanolamine phosphate/N-(9Z-octadecenoyl)-ethanolamine phosphate, a potential physiological compound. Through its extracellular phosphatase activity allows both the hydrolysis and the cellular uptake of these bioactive lipid mediators from the milieu, regulating signal transduction in different cellular processes. It is for instance essential for the extracellular hydrolysis of S1P and subsequent conversion into intracellular S1P. Involved in the regulation of inflammation, platelets activation, cell proliferation and migration among other processes. May also have an intracellular activity to regulate phospholipid-mediated signaling pathways. The polypeptide is Phospholipid phosphatase 1 (Homo sapiens (Human)).